The sequence spans 605 residues: Probable serine/threonine-protein kinase DDB_G0286481 (605 aa).

The helical transmembrane segment at 5 to 25 (YQIFFLLYLLCILYVISCGYI) threads the bilayer. N-linked (GlcNAc...) asparagine glycosylation is present at N53. Composition is skewed to low complexity over residues 54–81 (SSNN…NNNN) and 89–104 (NCNN…NKSN). Residues 54–170 (SSNNNNNNNN…LGGSMGSGSQ (117 aa)) form a disordered region. N92, N93, N97, and N101 each carry an N-linked (GlcNAc...) asparagine glycan. Basic residues predominate over residues 105 to 123 (IKNKQHHHHSNFRNRRGKS). A glycan (N-linked (GlcNAc...) asparagine) is linked at N127. Over residues 144 to 155 (QSSSYDTSELHQ) the composition is skewed to polar residues. N280 carries an N-linked (GlcNAc...) asparagine glycan. Positions 312–597 (YEVIQKIGRG…AKEAMKHPYF (286 aa)) constitute a Protein kinase domain. Residues 318–326 (IGRGKYSEV) and K341 each bind ATP. N-linked (GlcNAc...) asparagine glycosylation is present at N390. Catalysis depends on D429, which acts as the Proton acceptor. N-linked (GlcNAc...) asparagine glycosylation occurs at N601.

Belongs to the protein kinase superfamily. CMGC Ser/Thr protein kinase family.

The protein resides in the membrane. It catalyses the reaction L-seryl-[protein] + ATP = O-phospho-L-seryl-[protein] + ADP + H(+). The catalysed reaction is L-threonyl-[protein] + ATP = O-phospho-L-threonyl-[protein] + ADP + H(+). This chain is Probable serine/threonine-protein kinase DDB_G0286481, found in Dictyostelium discoideum (Social amoeba).